A 285-amino-acid polypeptide reads, in one-letter code: Ribosomal protein L11 methyltransferase (285 aa).

S-adenosyl-L-methionine contacts are provided by Thr-131, Gly-154, Asp-176, and Asn-223.

It belongs to the methyltransferase superfamily. PrmA family.

The protein resides in the cytoplasm. The enzyme catalyses L-lysyl-[protein] + 3 S-adenosyl-L-methionine = N(6),N(6),N(6)-trimethyl-L-lysyl-[protein] + 3 S-adenosyl-L-homocysteine + 3 H(+). Methylates ribosomal protein L11. This Brucella melitensis biotype 2 (strain ATCC 23457) protein is Ribosomal protein L11 methyltransferase.